Consider the following 208-residue polypeptide: Thymidylate kinase (208 aa).

ATP is bound at residue 10–17 (GPEGSGKT).

The protein belongs to the thymidylate kinase family.

The catalysed reaction is dTMP + ATP = dTDP + ADP. Its function is as follows. Phosphorylation of dTMP to form dTDP in both de novo and salvage pathways of dTTP synthesis. In Bacillus cereus (strain ATCC 10987 / NRS 248), this protein is Thymidylate kinase.